The sequence spans 117 residues: Large ribosomal subunit protein bL20 (117 aa).

The protein belongs to the bacterial ribosomal protein bL20 family.

Its function is as follows. Binds directly to 23S ribosomal RNA and is necessary for the in vitro assembly process of the 50S ribosomal subunit. It is not involved in the protein synthesizing functions of that subunit. The chain is Large ribosomal subunit protein bL20 from Mycoplasma mobile (strain ATCC 43663 / 163K / NCTC 11711) (Mesomycoplasma mobile).